The primary structure comprises 416 residues: Heat shock protein DDB_G0280215 (416 aa).

Residues 37 to 150 (SMDWGWKPRM…SQHISLFGRE (114 aa)) enclose the sHSP domain. The interval 216–235 (ETKERERRIRDTKGETEKKK) is disordered.

The protein belongs to the small heat shock protein (HSP20) family.

The sequence is that of Heat shock protein DDB_G0280215 from Dictyostelium discoideum (Social amoeba).